The chain runs to 411 residues: Citrate synthase (411 aa).

Catalysis depends on residues His304 and Asp363.

It belongs to the citrate synthase family.

It carries out the reaction oxaloacetate + acetyl-CoA + H2O = citrate + CoA + H(+). The protein operates within carbohydrate metabolism; tricarboxylic acid cycle; isocitrate from oxaloacetate: step 1/2. This Rickettsia conorii subsp. caspia (strain A-167) (Astrakhan rickettsia) protein is Citrate synthase (gltA).